The following is a 330-amino-acid chain: Formylaminopyrimidine-binding protein (330 aa).

An N-terminal signal peptide occupies residues 1–18; it reads MKSFKIISLLLAILFLAS. C19 carries the N-palmitoyl cysteine lipid modification. Residue C19 is the site of S-diacylglycerol cysteine attachment. Substrate-binding positions include 38–39, Y90, N145, Y188, and E192; that span reads DW.

This sequence belongs to the NMT1 family. In terms of assembly, the complex is likely composed of an ATP-binding protein (ThiZ), a transmembrane protein (ThiX) and a solute-binding protein (ThiY).

The protein localises to the cell membrane. Its pathway is cofactor biosynthesis; thiamine diphosphate biosynthesis. In terms of biological role, participates in a thiamine pyrimidine salvage pathway as part of the ABC transporter complex ThiXYZ involved in the import of thiamine degradation products. Binds the formylaminopyrimidine N-formyl-4-amino-5-aminomethyl-2-methylpyrimidine (FAMP). Does not bind thiamine. The protein is Formylaminopyrimidine-binding protein of Halalkalibacterium halodurans (strain ATCC BAA-125 / DSM 18197 / FERM 7344 / JCM 9153 / C-125) (Bacillus halodurans).